The sequence spans 704 residues: Polyribonucleotide nucleotidyltransferase (704 aa).

Residues D486 and D492 each coordinate Mg(2+). The KH domain maps to 553–612; sequence PRIYTMKINPEKIKDVIGKGGSVIRALTDETGTTIEIEDDGTIKIAATDGDKAKHAIRRI. The 69-residue stretch at 622–690 folds into the S1 motif domain; sequence GRIYAGKVTR…RQGRIRLSIK (69 aa).

It belongs to the polyribonucleotide nucleotidyltransferase family. In terms of assembly, component of the RNA degradosome, which is a multiprotein complex involved in RNA processing and mRNA degradation. Mg(2+) is required as a cofactor.

The protein resides in the cytoplasm. It carries out the reaction RNA(n+1) + phosphate = RNA(n) + a ribonucleoside 5'-diphosphate. Its function is as follows. Involved in mRNA degradation. Catalyzes the phosphorolysis of single-stranded polyribonucleotides processively in the 3'- to 5'-direction. This chain is Polyribonucleotide nucleotidyltransferase, found in Yersinia pseudotuberculosis serotype IB (strain PB1/+).